The sequence spans 347 residues: N-acetyl-gamma-glutamyl-phosphate reductase (347 aa).

The active site involves Cys-151.

Belongs to the NAGSA dehydrogenase family. Type 1 subfamily.

Its subcellular location is the cytoplasm. The catalysed reaction is N-acetyl-L-glutamate 5-semialdehyde + phosphate + NADP(+) = N-acetyl-L-glutamyl 5-phosphate + NADPH + H(+). It functions in the pathway amino-acid biosynthesis; L-arginine biosynthesis; N(2)-acetyl-L-ornithine from L-glutamate: step 3/4. Its function is as follows. Catalyzes the NADPH-dependent reduction of N-acetyl-5-glutamyl phosphate to yield N-acetyl-L-glutamate 5-semialdehyde. This is N-acetyl-gamma-glutamyl-phosphate reductase from Corynebacterium glutamicum (strain R).